Consider the following 339-residue polypeptide: MSRSGTWDMDGLRADGGAAGAAPASSSSSVAAPGQCRGFLSAPVFAGTHSGRAAAAAAAAAAAAAAASSFAYPGTSERTGSSSSSSSSAVIATRPEAPVAKECPAPAAAATAAAPPGAPALGYGYHFGNGYYSCRMSHGVGLQQNALKSSPHASLGGFPVEKYMDVSGLASSSVPTNEVPARAKEVSFYQGYTSPYQHVPGYIDMVSTFGSGEPRHEAYISMEGYQSWTLANGWNSQVYCAKDQPQGSHFWKSSFPGDVALNQPDMCVYRRGRKKRVPYTKLQLKELENEYAINKFINKDKRRRISAATNLSERQVTIWFQNRRVKDKKIVSKLKDTVS.

The tract at residues 1–33 (MSRSGTWDMDGLRADGGAAGAAPASSSSSVAAP) is disordered. A compositionally biased stretch (low complexity) spans 20-33 (GAAPASSSSSVAAP). The homeobox DNA-binding region spans 272–331 (GRKKRVPYTKLQLKELENEYAINKFINKDKRRRISAATNLSERQVTIWFQNRRVKDKKIV).

Belongs to the Abd-B homeobox family.

Its subcellular location is the nucleus. Functionally, sequence-specific transcription factor that binds gene promoters and activates their transcription. Part of a developmental regulatory system that provides cells with specific positional identities on the anterior-posterior axis. The chain is Homeobox protein Hox-D13 (Hoxd13) from Mus musculus (Mouse).